The sequence spans 74 residues: NAD(P)H-quinone oxidoreductase subunit O (74 aa).

Belongs to the complex I NdhO subunit family. As to quaternary structure, NDH-1 can be composed of about 15 different subunits; different subcomplexes with different compositions have been identified which probably have different functions.

The protein localises to the cellular thylakoid membrane. It carries out the reaction a plastoquinone + NADH + (n+1) H(+)(in) = a plastoquinol + NAD(+) + n H(+)(out). The catalysed reaction is a plastoquinone + NADPH + (n+1) H(+)(in) = a plastoquinol + NADP(+) + n H(+)(out). Functionally, NDH-1 shuttles electrons from an unknown electron donor, via FMN and iron-sulfur (Fe-S) centers, to quinones in the respiratory and/or the photosynthetic chain. The immediate electron acceptor for the enzyme in this species is believed to be plastoquinone. Couples the redox reaction to proton translocation, and thus conserves the redox energy in a proton gradient. Cyanobacterial NDH-1 also plays a role in inorganic carbon-concentration. The chain is NAD(P)H-quinone oxidoreductase subunit O from Synechococcus sp. (strain RCC307).